Here is a 100-residue protein sequence, read N- to C-terminus: MSTSTSCPIPGGRDQLPDCYSTTPGGTLYATTPGGTRIIYDRKFLLECKNSPIARTPPCCLPQIPGVTTPPTAPLSKLEELKEQETEEEIPDDAQFEMDI.

Positions Tyr40–Leu46 match the YXXXXLphi motif motif. Residues Leu81 to Ile100 form a disordered region. The segment covering Glu85–Ile100 has biased composition (acidic residues). The TOS motif motif lies at Phe96 to Ile100.

Belongs to the eIF4E-binding protein family. Interacts with EIF4E. Interacts with RPA2 (in unphosphorylated form via N-terminus); the interaction enhances EIF4EBP3-mediated inhibition of EIF4E-mediated mRNA nuclear export. In terms of processing, phosphorylated. Expression is highest in skeletal muscle, heart, kidney, and pancreas, whereas there is very little expression in brain and thymus.

Its subcellular location is the cytoplasm. It localises to the nucleus. Its function is as follows. Repressor of translation initiation that regulates EIF4E activity by preventing its assembly into the eIF4F complex: the hypophosphorylated form competes with EIF4G1/EIF4G3 and strongly binds to EIF4E, leading to repression of translation. In contrast, the hyperphosphorylated form dissociates from EIF4E, allowing interaction between EIF4G1/EIF4G3 and EIF4E, leading to initiation of translation. Inhibits EIF4E-mediated mRNA nuclear export. The protein is Eukaryotic translation initiation factor 4E-binding protein 3 (EIF4EBP3) of Homo sapiens (Human).